A 419-amino-acid polypeptide reads, in one-letter code: UDP-N-acetylglucosamine 1-carboxyvinyltransferase (419 aa).

Phosphoenolpyruvate is bound at residue 22–23 (KN). Arg93 lines the UDP-N-acetyl-alpha-D-glucosamine pocket. Residue Cys117 is the Proton donor of the active site. Cys117 is subject to 2-(S-cysteinyl)pyruvic acid O-phosphothioketal. UDP-N-acetyl-alpha-D-glucosamine is bound by residues 122–126 (RPVDL), Asp308, and Ile330.

This sequence belongs to the EPSP synthase family. MurA subfamily.

Its subcellular location is the cytoplasm. It carries out the reaction phosphoenolpyruvate + UDP-N-acetyl-alpha-D-glucosamine = UDP-N-acetyl-3-O-(1-carboxyvinyl)-alpha-D-glucosamine + phosphate. It participates in cell wall biogenesis; peptidoglycan biosynthesis. Cell wall formation. Adds enolpyruvyl to UDP-N-acetylglucosamine. The protein is UDP-N-acetylglucosamine 1-carboxyvinyltransferase of Pseudomonas putida (Arthrobacter siderocapsulatus).